Here is a 652-residue protein sequence, read N- to C-terminus: Serine/threonine-protein kinase ssp1 (652 aa).

Tyrosine 58 carries the post-translational modification Phosphotyrosine. Serine 59 carries the phosphoserine modification. Position 63 is a phosphotyrosine (tyrosine 63). The Protein kinase domain occupies tyrosine 135–threonine 409. ATP-binding positions include leucine 141–valine 149 and lysine 164. Aspartate 267 functions as the Proton acceptor in the catalytic mechanism. Disordered regions lie at residues aspartate 467–leucine 491 and asparagine 506–lysine 529. Over residues serine 508–histidine 518 the composition is skewed to basic and acidic residues.

It belongs to the protein kinase superfamily. Ser/Thr protein kinase family.

It localises to the cytoplasm. The enzyme catalyses L-seryl-[protein] + ATP = O-phospho-L-seryl-[protein] + ADP + H(+). The catalysed reaction is L-threonyl-[protein] + ATP = O-phospho-L-threonyl-[protein] + ADP + H(+). Functionally, involved in actin localization and thus in polarized cell growth. The sequence is that of Serine/threonine-protein kinase ssp1 (ssp1) from Schizosaccharomyces pombe (strain 972 / ATCC 24843) (Fission yeast).